The chain runs to 161 residues: Phosphopantetheine adenylyltransferase (161 aa).

Ser-9 is a binding site for substrate. ATP-binding positions include 9-10 (SF) and His-17. Positions 41, 73, and 87 each coordinate substrate. Residues 88–90 (GLR), Glu-98, and 123–129 (YSFISST) contribute to the ATP site.

The protein belongs to the bacterial CoaD family. Homohexamer. The cofactor is Mg(2+).

It is found in the cytoplasm. It catalyses the reaction (R)-4'-phosphopantetheine + ATP + H(+) = 3'-dephospho-CoA + diphosphate. The protein operates within cofactor biosynthesis; coenzyme A biosynthesis; CoA from (R)-pantothenate: step 4/5. Reversibly transfers an adenylyl group from ATP to 4'-phosphopantetheine, yielding dephospho-CoA (dPCoA) and pyrophosphate. In Desulforamulus reducens (strain ATCC BAA-1160 / DSM 100696 / MI-1) (Desulfotomaculum reducens), this protein is Phosphopantetheine adenylyltransferase.